Here is a 187-residue protein sequence, read N- to C-terminus: Elongation factor P (187 aa).

Belongs to the elongation factor P family.

It localises to the cytoplasm. It functions in the pathway protein biosynthesis; polypeptide chain elongation. Functionally, involved in peptide bond synthesis. Stimulates efficient translation and peptide-bond synthesis on native or reconstituted 70S ribosomes in vitro. Probably functions indirectly by altering the affinity of the ribosome for aminoacyl-tRNA, thus increasing their reactivity as acceptors for peptidyl transferase. The protein is Elongation factor P of Corynebacterium diphtheriae (strain ATCC 700971 / NCTC 13129 / Biotype gravis).